The following is a 187-amino-acid chain: Peptidyl-tRNA hydrolase (187 aa).

Tyr-15 lines the tRNA pocket. Residue His-20 is the Proton acceptor of the active site. TRNA contacts are provided by Tyr-64, Asn-66, and Asn-112.

Belongs to the PTH family. As to quaternary structure, monomer.

The protein resides in the cytoplasm. It carries out the reaction an N-acyl-L-alpha-aminoacyl-tRNA + H2O = an N-acyl-L-amino acid + a tRNA + H(+). Hydrolyzes ribosome-free peptidyl-tRNAs (with 1 or more amino acids incorporated), which drop off the ribosome during protein synthesis, or as a result of ribosome stalling. In terms of biological role, catalyzes the release of premature peptidyl moieties from peptidyl-tRNA molecules trapped in stalled 50S ribosomal subunits, and thus maintains levels of free tRNAs and 50S ribosomes. This Phocaeicola vulgatus (strain ATCC 8482 / DSM 1447 / JCM 5826 / CCUG 4940 / NBRC 14291 / NCTC 11154) (Bacteroides vulgatus) protein is Peptidyl-tRNA hydrolase.